A 570-amino-acid chain; its full sequence is Endo-1,4-beta-xylanase 4 (570 aa).

Residues 1-24 (MKRFNYGFFHLVLFLISLLLLGSG) form the signal peptide. N-linked (GlcNAc...) asparagine glycans are attached at residues N92, N190, and N300. The 300-residue stretch at 195–494 (EGSVISIEQI…TQAGDLIDKL (300 aa)) folds into the GH10 domain. The Proton donor role is filled by E325. N339 carries an N-linked (GlcNAc...) asparagine glycan. The Nucleophile role is filled by E432. N545 carries an N-linked (GlcNAc...) asparagine glycan.

Belongs to the glycosyl hydrolase 10 (cellulase F) family.

It carries out the reaction Endohydrolysis of (1-&gt;4)-beta-D-xylosidic linkages in xylans.. It participates in glycan degradation; xylan degradation. Its function is as follows. Binds to and hydrolyzes insoluble and soluble xylan substrates. In Arabidopsis thaliana (Mouse-ear cress), this protein is Endo-1,4-beta-xylanase 4.